A 416-amino-acid polypeptide reads, in one-letter code: Multifunctional CCA protein (416 aa).

Residues G8 and R11 each contribute to the ATP site. CTP is bound by residues G8 and R11. Positions 21 and 23 each coordinate Mg(2+). ATP is bound by residues R91, R137, and R140. Positions 91, 137, and 140 each coordinate CTP. The region spanning 228 to 329 (TGVHTLMVLA…VKIFDKADFW (102 aa)) is the HD domain.

The protein belongs to the tRNA nucleotidyltransferase/poly(A) polymerase family. Bacterial CCA-adding enzyme type 1 subfamily. As to quaternary structure, monomer. Can also form homodimers and oligomers. Mg(2+) serves as cofactor. Ni(2+) is required as a cofactor.

The catalysed reaction is a tRNA precursor + 2 CTP + ATP = a tRNA with a 3' CCA end + 3 diphosphate. It carries out the reaction a tRNA with a 3' CCA end + 2 CTP + ATP = a tRNA with a 3' CCACCA end + 3 diphosphate. Functionally, catalyzes the addition and repair of the essential 3'-terminal CCA sequence in tRNAs without using a nucleic acid template. Adds these three nucleotides in the order of C, C, and A to the tRNA nucleotide-73, using CTP and ATP as substrates and producing inorganic pyrophosphate. tRNA 3'-terminal CCA addition is required both for tRNA processing and repair. Also involved in tRNA surveillance by mediating tandem CCA addition to generate a CCACCA at the 3' terminus of unstable tRNAs. While stable tRNAs receive only 3'-terminal CCA, unstable tRNAs are marked with CCACCA and rapidly degraded. In Shewanella baltica (strain OS185), this protein is Multifunctional CCA protein.